A 312-amino-acid chain; its full sequence is D-alanine--D-alanine ligase (312 aa).

An ATP-grasp domain is found at 102–307 (KKIFKMEGIP…FPELTDRLIK (206 aa)). Position 136–191 (136–191 (IKEVGVPAVVKANTQGSTIGITFVHVKEKMAEAIESALKYDQDVLVEQFVAGTEVT)) interacts with ATP. Residues D262, E274, and N276 each coordinate Mg(2+).

This sequence belongs to the D-alanine--D-alanine ligase family. Mg(2+) serves as cofactor. It depends on Mn(2+) as a cofactor.

It localises to the cytoplasm. It catalyses the reaction 2 D-alanine + ATP = D-alanyl-D-alanine + ADP + phosphate + H(+). It functions in the pathway cell wall biogenesis; peptidoglycan biosynthesis. In terms of biological role, cell wall formation. The chain is D-alanine--D-alanine ligase from Desulforamulus reducens (strain ATCC BAA-1160 / DSM 100696 / MI-1) (Desulfotomaculum reducens).